Here is a 421-residue protein sequence, read N- to C-terminus: O-acetyl-L-homoserine sulfhydrylase 1 (421 aa).

Residue Lys-206 is modified to N6-(pyridoxal phosphate)lysine.

It belongs to the trans-sulfuration enzymes family. In terms of assembly, homotetramer. Pyridoxal 5'-phosphate is required as a cofactor.

The catalysed reaction is O-acetyl-L-homoserine + hydrogen sulfide = L-homocysteine + acetate. It functions in the pathway amino-acid biosynthesis; L-methionine biosynthesis via de novo pathway; L-homocysteine from O-acetyl-L-homoserine: step 1/1. Inhibited by the carbonyl reagents hydroxylamine and phenylhydrazine. Also inhibited by methionine and propargylglycine. Catalyzes the conversion of O-acetyl-L-homoserine (OAH) into homocysteine in the methionine biosynthesis pathway. Has weak activity with O-acetyl-L-serine, O-phospho-L-serine, L-serine, O-succinyl-L-homoserine and L-homoserine. Shows low CTT beta-lyase activity and very low CTT gamma-synthase activity. The chain is O-acetyl-L-homoserine sulfhydrylase 1 from Thermus thermophilus (strain ATCC 27634 / DSM 579 / HB8).